The following is a 178-amino-acid chain: Neuroblastoma suppressor of tumorigenicity 1 (178 aa).

The N-terminal stretch at 1–16 (MLWVLVGAVLPVMLLA) is a signal peptide. Cystine bridges form between Cys34–Cys84, Cys48–Cys98, Cys58–Cys117, Cys62–Cys119, and Cys81–Cys122. Positions 34 to 123 (CEAKNITQIV…IVHCSCQACG (90 aa)) constitute a CTCK domain. A disordered region spans residues 132 to 178 (NVYVQGEDSPGSQPGPHSHAHPHPGGQTPEPEEPPGAPQVEEEGAED). Residues 140–160 (SPGSQPGPHSHAHPHPGGQTP) show a composition bias toward low complexity.

It belongs to the DAN family. In terms of assembly, homodimer.

It localises to the secreted. Possible candidate as a tumor suppressor gene of neuroblastoma. May play an important role in preventing cells from entering the final stage (G1/S) of the transformation process. This is Neuroblastoma suppressor of tumorigenicity 1 (Nbl1) from Mus musculus (Mouse).